The sequence spans 284 residues: MKNIGIAINPSKDYKNTILNMVKEKIENICNVTDIEVYNSFDIKNLNLSSLDLLIVLGGDGTLLGVARELEDDFKAPILGINIGNLGVLSSIEISDLELALKKLMTKDCKVHKRMMLNCEVDINESIKNIKALNEVAVARGTLSRMVKFKIFVDEKLYAIFKGDGLIVSTPTGSTAYSFSAGGPFICPDLEVISIVPICDHTKSMHPIVLKGDSTIKIIAENGGDQIYLTIDGQRAIEMKDNSVITVKKNPKSLKLLLFNDYDYFKVIRNKVLNNSKECDGEEI.

Catalysis depends on Asp60, which acts as the Proton acceptor. Residues 60–61, 134–135, Arg145, Lys162, Asp164, 175–180, and Gln234 each bind NAD(+); these read DG, NE, and TAYSFS.

This sequence belongs to the NAD kinase family. It depends on a divalent metal cation as a cofactor.

The protein localises to the cytoplasm. It catalyses the reaction NAD(+) + ATP = ADP + NADP(+) + H(+). Involved in the regulation of the intracellular balance of NAD and NADP, and is a key enzyme in the biosynthesis of NADP. Catalyzes specifically the phosphorylation on 2'-hydroxyl of the adenosine moiety of NAD to yield NADP. The protein is NAD kinase of Clostridium botulinum (strain Alaska E43 / Type E3).